The following is a 474-amino-acid chain: L-arabinose isomerase (474 aa).

Glutamate 306, glutamate 331, histidine 348, and histidine 447 together coordinate Mn(2+).

Belongs to the arabinose isomerase family. Mn(2+) serves as cofactor.

The enzyme catalyses beta-L-arabinopyranose = L-ribulose. It functions in the pathway carbohydrate degradation; L-arabinose degradation via L-ribulose; D-xylulose 5-phosphate from L-arabinose (bacterial route): step 1/3. Its function is as follows. Catalyzes the conversion of L-arabinose to L-ribulose. The protein is L-arabinose isomerase of Levilactobacillus brevis (strain ATCC 367 / BCRC 12310 / CIP 105137 / JCM 1170 / LMG 11437 / NCIMB 947 / NCTC 947) (Lactobacillus brevis).